Here is a 182-residue protein sequence, read N- to C-terminus: Large ribosomal subunit protein uL6 (182 aa).

This sequence belongs to the universal ribosomal protein uL6 family. As to quaternary structure, part of the 50S ribosomal subunit.

In terms of biological role, this protein binds to the 23S rRNA, and is important in its secondary structure. It is located near the subunit interface in the base of the L7/L12 stalk, and near the tRNA binding site of the peptidyltransferase center. The protein is Large ribosomal subunit protein uL6 of Karelsulcia muelleri (strain GWSS) (Sulcia muelleri).